The chain runs to 352 residues: Protein Wnt-2 (352 aa).

The signal sequence occupies residues 1–23; it reads MWKIHNKLLIYILWIMEIRLVSS. 11 disulfides stabilise this stretch: Cys65-Cys76, Cys115-Cys123, Cys125-Cys148, Cys196-Cys210, Cys198-Cys205, Cys281-Cys312, Cys297-Cys307, Cys311-Cys351, Cys327-Cys342, Cys329-Cys339, and Cys334-Cys335. N-linked (GlcNAc...) asparagine glycosylation is found at Asn75 and Asn119. Ser202 carries O-palmitoleoyl serine; by PORCN lipidation.

This sequence belongs to the Wnt family. Post-translationally, palmitoleoylated by porcupine. The lipid group functions as a sorting signal, targeting the ligand to polarized vesicles that transport Wnt2 to unique sites at the cell surface. Depalmitoleoylated by notum, leading to inhibit Wnt signaling pathway. Dynamic expression pattern during embryogenesis. Expression is predominantly segmented, with expression also seen in the limb primordia and presumptive gonads. In embryonic tracheal cells, expression is close to and dorsal to the tracheal placode.

It is found in the secreted. Its subcellular location is the extracellular space. The protein resides in the extracellular matrix. Binds as a ligand to a family of frizzled seven-transmembrane receptors and acts through a cascade of genes on the nucleus. Segment polarity protein. May function in gonadogenesis and limb development. Wg and Wnt2 have a role in the developing trachea and together are responsible for all dorsal trunk formation. This Drosophila melanogaster (Fruit fly) protein is Protein Wnt-2 (Wnt2).